The sequence spans 565 residues: Deformed epidermal autoregulatory factor 1 homolog (565 aa).

Disordered regions lie at residues 34–62 (GGEA…ETPR) and 162–190 (GLKG…KGGT). The segment covering 169–181 (PLTPGPQSPPTPL) has biased composition (pro residues). T171 bears the Phosphothreonine mark. The residue at position 176 (S176) is a Phosphoserine. T179 carries the phosphothreonine modification. Residues 193–273 (NWDPSVYDSE…QCLIQDGILN (81 aa)) form the SAND domain. A Nuclear localization signal motif is present at residues 301–316 (KRRKKENELPTTPVKK). Residues 403–478 (IAPFPEAALP…QLKTLFEQAK (76 aa)) form an interaction with LMO4 region. Residue T432 is modified to Phosphothreonine. S448 carries the post-translational modification Phosphoserine. 8 residues coordinate Zn(2+): C504, C507, C515, C518, C524, C528, H536, and C540. The MYND-type zinc-finger motif lies at 504–540 (CVNCGREAMNECTGCHKVNYCSTFCQRKDWKDHQHIC).

As to quaternary structure, homodimer. Interacts with LMO4; LMO4 blocks export from nucleus. Interacts with LMO2 and CLIM2. May interact with the corepressors NCOR1 and NCRO2. Identified in a complex with XRCC5 and XRCC6. Interacts (via the SAND domain) with the DNA-PK complex subunit XRCC6; the interaction is direct and may be inhibited by DNA-binding. In terms of processing, may be phosphorylated by DNA-PK complex in a DNA independent manner (in vitro).

The protein localises to the nucleus. In terms of biological role, transcription factor that binds to sequence with multiple copies of 5'-TTC[CG]G-3' present in its own promoter and that of the HNRPA2B1 gene. Down-regulates transcription of these genes. Binds to the retinoic acid response element (RARE) 5'-AGGGTTCACCGAAAGTTCA-3'. Activates the proenkephalin gene independently of promoter binding, probably through protein-protein interaction. Regulates epithelial cell proliferation and side-branching in the mammary gland. Required for neural tube closure and skeletal patterning. Controls the expression of peripheral tissue antigens in pancreatic lymph nodes. Transcriptional activator of EIF4G3. May also involved in behavior. This is Deformed epidermal autoregulatory factor 1 homolog (DEAF1) from Pan troglodytes (Chimpanzee).